The sequence spans 301 residues: GTPase Era (301 aa).

The Era-type G domain occupies 7–175 (YCGFIAIVGR…ASIVRKHLPE (169 aa)). Positions 15-22 (GRPNVGKS) are G1. A GTP-binding site is contributed by 15–22 (GRPNVGKS). Residues 41–45 (QTTRH) form a G2 region. A G3 region spans residues 62 to 65 (DTPG). GTP is bound by residues 62–66 (DTPGL) and 124–127 (NKVD). A G4 region spans residues 124–127 (NKVD). A G5 region spans residues 154–156 (ISA). In terms of domain architecture, KH type-2 spans 206–283 (LGAELPYSVT…HLELWVKVKS (78 aa)).

It belongs to the TRAFAC class TrmE-Era-EngA-EngB-Septin-like GTPase superfamily. Era GTPase family. Monomer.

Its subcellular location is the cytoplasm. It is found in the cell inner membrane. Functionally, an essential GTPase that binds both GDP and GTP, with rapid nucleotide exchange. Plays a role in 16S rRNA processing and 30S ribosomal subunit biogenesis and possibly also in cell cycle regulation and energy metabolism. The sequence is that of GTPase Era from Salmonella arizonae (strain ATCC BAA-731 / CDC346-86 / RSK2980).